The sequence spans 363 residues: DNA replication and repair protein RecF (363 aa).

30-37 (GDNAQGKT) serves as a coordination point for ATP.

Belongs to the RecF family.

Its subcellular location is the cytoplasm. The RecF protein is involved in DNA metabolism; it is required for DNA replication and normal SOS inducibility. RecF binds preferentially to single-stranded, linear DNA. It also seems to bind ATP. The polypeptide is DNA replication and repair protein RecF (Syntrophotalea carbinolica (strain DSM 2380 / NBRC 103641 / GraBd1) (Pelobacter carbinolicus)).